The chain runs to 670 residues: DEAD-box ATP-dependent RNA helicase 16 (670 aa).

Residues 1–10 (MAAAAAASSM) are compositionally biased toward low complexity. A disordered region spans residues 1 to 97 (MAAAAAASSM…EEREVSFDEL (97 aa)). 2 stretches are compositionally biased toward basic and acidic residues: residues 18–30 (AATE…HDEA) and 40–49 (NDGHTAHAAE). The Q motif signature appears at 92-120 (VSFDELGLDEQLKRALRKKGLDKATPIQR). Residues 123–306 (IPLILEGKDV…KLLLHNPFIL (184 aa)) enclose the Helicase ATP-binding domain. 136–143 (AKTGSGKT) provides a ligand contact to ATP. The DEAD box signature appears at 254-257 (DEAD). One can recognise a Helicase C-terminal domain in the interval 340–523 (LVLLKLELIQ…PFPLLTKNAV (184 aa)). The disordered stretch occupies residues 616–670 (DIDKPRRRKRMGFKGGSGRSSDPLKTFSAEGKSRRRGRKERDGEQDRRKRKKVES). The segment covering 654–670 (KERDGEQDRRKRKKVES) has biased composition (basic and acidic residues).

This sequence belongs to the DEAD box helicase family. DDX56/DBP9 subfamily.

It catalyses the reaction ATP + H2O = ADP + phosphate + H(+). The sequence is that of DEAD-box ATP-dependent RNA helicase 16 from Oryza sativa subsp. japonica (Rice).